The primary structure comprises 84 residues: Protein SlyX homolog (84 aa).

It belongs to the SlyX family.

This is Protein SlyX homolog from Mannheimia succiniciproducens (strain KCTC 0769BP / MBEL55E).